Here is a 48-residue protein sequence, read N- to C-terminus: Protein TUNAR (48 aa).

The tract at residues methionine 1–glutamate 20 is disordered. Residues aspartate 8–glutamate 20 show a composition bias toward basic and acidic residues. A helical transmembrane segment spans residues leucine 24–isoleucine 44.

In terms of assembly, interacts with ATPase ATP2A2/SERCA2. Interacts with ATPase ATP2A3/SERCA3; the interaction occurs at low levels in low glucose conditions and is increased by high glucose levels. As to expression, in the adult, expressed in Purkinje cells in the cerebellum, in motor neurons and interneurons in the spinal cord and in neurons of the cortex, hippocampus and thalamus (at protein level). Also detected in the developing cortex, hippocampus and thalamus at embryonic day E15.5 (at protein level).

The protein localises to the endoplasmic reticulum membrane. It is found in the extracellular vesicle membrane. In terms of biological role, in neurons, plays a role in the regulation of intracellular Ca(2+), possibly by acting as an activator of ATP2A2/SERCA2, thus increasing the efficiency with which Ca(2+) is removed from the cytoplasm. Inhibits differentiation of embryonic stem cells into neurons and inhibits neurite outgrowth, likely as a result of its role in intracellular Ca(2+) regulation. In pancreatic beta cells, lowers Ca(2+) levels in the endoplasmic reticulum and enhances glucose-stimulated insulin secretion. This chain is Protein TUNAR, found in Mus musculus (Mouse).